The sequence spans 126 residues: Holo-[acyl-carrier-protein] synthase (126 aa).

Aspartate 9 and glutamate 58 together coordinate Mg(2+).

Belongs to the P-Pant transferase superfamily. AcpS family. It depends on Mg(2+) as a cofactor.

The protein localises to the cytoplasm. The enzyme catalyses apo-[ACP] + CoA = holo-[ACP] + adenosine 3',5'-bisphosphate + H(+). In terms of biological role, transfers the 4'-phosphopantetheine moiety from coenzyme A to a Ser of acyl-carrier-protein. The sequence is that of Holo-[acyl-carrier-protein] synthase from Enterobacter sp. (strain 638).